Here is a 417-residue protein sequence, read N- to C-terminus: Sulfite reductase, dissimilatory-type subunit alpha (417 aa).

Residues cysteine 170, cysteine 176, cysteine 214, cysteine 218, cysteine 264, cysteine 284, cysteine 287, and cysteine 290 each coordinate [4Fe-4S] cluster. A siroheme-binding site is contributed by cysteine 218.

[4Fe-4S] cluster serves as cofactor. It depends on siroheme as a cofactor.

It catalyses the reaction [DsrC protein]-trisulfide + NAD(+) + 3 H2O = [DsrC protein]-dithiol + sulfite + NADH + 3 H(+). Its function is as follows. Catalyzes the reduction of sulfite to sulfide. This is the terminal oxidation reaction in sulfate respiration. The protein is Sulfite reductase, dissimilatory-type subunit alpha (dsrA) of Allochromatium vinosum (strain ATCC 17899 / DSM 180 / NBRC 103801 / NCIMB 10441 / D) (Chromatium vinosum).